The sequence spans 325 residues: Protein TMED8 (325 aa).

The tract at residues 1 to 78 (MSDLQAAEGP…MVSPVSKDAT (78 aa)) is disordered. Residues 159–323 (PPCIWTFAKV…NKTLYFHIYY (165 aa)) form the GOLD domain. At Lys169 the chain carries N6-acetyllysine. The interval 232-267 (TVQVSDSSDDEDEEEEEEEEIEEPVPAGDVERGSRS) is disordered. Residues 238-254 (SSDDEDEEEEEEEEIEE) are compositionally biased toward acidic residues.

The sequence is that of Protein TMED8 (TMED8) from Homo sapiens (Human).